Here is a 277-residue protein sequence, read N- to C-terminus: Phosphatidylglycerol--prolipoprotein diacylglyceryl transferase (277 aa).

7 helical membrane-spanning segments follow: residues 21-41 (LAVRWYGLMYLFGFMFALWLA), 60-80 (LLFAGFLGVVIGGRVGYVLFY), 95-115 (VWTGGMSFHGGLLGVISAMLW), 124-144 (FFTIADFVAPLVPFGLGAGRL), 176-196 (SQLYEFALEGVVLFLILNWFI), 203-223 (GTVSGLFLFGYGTFRFLVEYV), and 239-259 (MGQILSLPMVIGGLLMMLWAF). Arg-143 is an a 1,2-diacyl-sn-glycero-3-phospho-(1'-sn-glycerol) binding site.

The protein belongs to the Lgt family.

Its subcellular location is the cell inner membrane. The catalysed reaction is L-cysteinyl-[prolipoprotein] + a 1,2-diacyl-sn-glycero-3-phospho-(1'-sn-glycerol) = an S-1,2-diacyl-sn-glyceryl-L-cysteinyl-[prolipoprotein] + sn-glycerol 1-phosphate + H(+). The protein operates within protein modification; lipoprotein biosynthesis (diacylglyceryl transfer). In terms of biological role, catalyzes the transfer of the diacylglyceryl group from phosphatidylglycerol to the sulfhydryl group of the N-terminal cysteine of a prolipoprotein, the first step in the formation of mature lipoproteins. The chain is Phosphatidylglycerol--prolipoprotein diacylglyceryl transferase from Aliivibrio fischeri (strain ATCC 700601 / ES114) (Vibrio fischeri).